Here is a 382-residue protein sequence, read N- to C-terminus: Prolargin (382 aa).

An N-terminal signal peptide occupies residues M1–G20. The tract at residues Q19–P66 is disordered. Composition is skewed to pro residues over residues R41–D50 and D57–P66. 12 LRR repeats span residues R95 to I114, T115 to I138, R139 to L162, E163 to I183, S184 to L207, S208 to L233, R234 to I254, E255 to L278, T279 to I303, S304 to I323, E324 to L362, and K363 to I382. An N-linked (GlcNAc...) asparagine glycan is attached at N124. N-linked (GlcNAc...) asparagine glycosylation is found at N289, N320, and N327. A disulfide bridge connects residues C332 and C373.

Belongs to the small leucine-rich proteoglycan (SLRP) family. SLRP class II subfamily. In terms of assembly, binds the basement membrane heparan sulfate proteoglycan perlecan and triple helical collagens type I and type II. Glycosylated; contains heparan sulfate. In terms of tissue distribution, connective tissue.

It localises to the secreted. The protein localises to the extracellular space. The protein resides in the extracellular matrix. Functionally, may anchor basement membranes to the underlying connective tissue. The polypeptide is Prolargin (PRELP) (Homo sapiens (Human)).